A 142-amino-acid polypeptide reads, in one-letter code: 3-hydroxyacyl-[acyl-carrier-protein] dehydratase FabZ (142 aa).

His-48 is a catalytic residue.

The protein belongs to the thioester dehydratase family. FabZ subfamily.

The protein resides in the cytoplasm. It carries out the reaction a (3R)-hydroxyacyl-[ACP] = a (2E)-enoyl-[ACP] + H2O. Involved in unsaturated fatty acids biosynthesis. Catalyzes the dehydration of short chain beta-hydroxyacyl-ACPs and long chain saturated and unsaturated beta-hydroxyacyl-ACPs. This Anoxybacillus flavithermus (strain DSM 21510 / WK1) protein is 3-hydroxyacyl-[acyl-carrier-protein] dehydratase FabZ.